The chain runs to 295 residues: Sulfotransferase 1E1 (295 aa).

Lys-48–Trp-53 contributes to the 3'-phosphoadenylyl sulfate binding site. Residue Lys-106–His-108 coordinates substrate. Catalysis depends on His-108, which acts as the Proton acceptor. 3'-phosphoadenylyl sulfate-binding residues include Arg-130 and Ser-138. Residue Ser-156 is modified to Phosphoserine. Residues Tyr-193, Thr-227 to Met-232, and Arg-257 to Gly-259 contribute to the 3'-phosphoadenylyl sulfate site.

The protein belongs to the sulfotransferase 1 family. As to quaternary structure, homodimer. In terms of tissue distribution, testis and at very low level in the placenta.

The protein resides in the cytoplasm. The protein localises to the cytosol. It catalyses the reaction estrone + 3'-phosphoadenylyl sulfate = estrone 3-sulfate + adenosine 3',5'-bisphosphate + H(+). It carries out the reaction 17beta-estradiol + 3'-phosphoadenylyl sulfate = 17beta-estradiol 3-sulfate + adenosine 3',5'-bisphosphate + H(+). The catalysed reaction is (24S)-hydroxycholesterol + 3'-phosphoadenylyl sulfate = (24S)-hydroxycholesterol 3-sulfate + adenosine 3',5'-bisphosphate + H(+). The enzyme catalyses 3beta-hydroxyandrost-5-en-17-one + 3'-phosphoadenylyl sulfate = dehydroepiandrosterone 3-sulfate + adenosine 3',5'-bisphosphate + H(+). It catalyses the reaction 4-ethylphenol + 3'-phosphoadenylyl sulfate = 4-ethylphenyl sulfate + adenosine 3',5'-bisphosphate + H(+). With respect to regulation, inhibited by estradiol. Functionally, sulfotransferase that utilizes 3'-phospho-5'-adenylyl sulfate (PAPS) as sulfonate donor to catalyze the sulfate conjugation of estradiol and estrone. Is a key enzyme in estrogen homeostasis, the sulfation of estrogens leads to their inactivation. Also sulfates dehydroepiandrosterone, pregnenolone, (24S)-hydroxycholesterol and xenobiotic compounds like ethinylestradiol, equalenin, diethyl stilbesterol and 1-naphthol at significantly lower efficiency. Does not sulfonate cortisol, testosterone and dopamine. May play a role in gut microbiota-host metabolic interaction. O-sulfonates 4-ethylphenol (4-EP), a dietary tyrosine-derived metabolite produced by gut bacteria. The product 4-EPS crosses the blood-brain barrier and may negatively regulate oligodendrocyte maturation and myelination, affecting the functional connectivity of different brain regions associated with the limbic system. The sequence is that of Sulfotransferase 1E1 (Sult1e1) from Mus musculus (Mouse).